Reading from the N-terminus, the 377-residue chain is Metallo-hydrolase mfmC (377 aa).

Zn(2+) is bound by residues His-126, His-128, Asp-130, His-131, His-209, and Asp-233.

It belongs to the metallo-beta-lactamase superfamily.

The protein operates within secondary metabolite biosynthesis; terpenoid biosynthesis. In terms of biological role, metallo-hydrolase; part of the gene cluster that mediates the biosynthesis of the phthalide-terpenoid hybrid 11'-O-desmethylfendlerol. Within the pathway, mfma and mfmC act together to convert 3,5-dimethylorsellinic acid (DMOA) into the phthalide 5,7-dihydroxy-4-(hydroxymethyl)-6-methylphthalide. The biosynthesis of 11'-O-desmethylfendlerol begins with the NR-PKS mfmB that forms 3,5-dimethylorsellinic acid (DMOA), which is then transformed into the phthalide 5,7-dihydroxy-4-(hydroxymethyl)-6-methylphthalide by the cytochrome P450 monooxygenase mfmA and the hydrolase mfmC. Subsequently, the methyltransferase mfmE catalyzes 7-O-methylation to yield 5-hydroxy-4-(hydroxymethyl)-7-methoxy-6-methylphthalide, which undergoes C-3 hydroxylation by the cytochrome P450 monooxygenase mfmF. The resultant cyclopolic acid (2,5-dihydroxy-4-(hydroxymethyl)-7-methoxy-6-methylphthalide) is then farnesylated by the DMATS-type prenyltransferase mfmD to afford 5-O-farnesylcyclopolic acid. Finally, the Pyr4-family terpene cyclase mfmH cyclizes the farnesyl moiety of 5-O-farnesylcyclopolic acid into a drimane-like structure, thus completing the biosynthesis of 11'-O-desmethylfendlerol. This is Metallo-hydrolase mfmC from Annulohypoxylon moriforme (Filamentous fungus).